We begin with the raw amino-acid sequence, 138 residues long: Large ribosomal subunit protein uL16 (138 aa).

It belongs to the universal ribosomal protein uL16 family. As to quaternary structure, part of the 50S ribosomal subunit.

Functionally, binds 23S rRNA and is also seen to make contacts with the A and possibly P site tRNAs. The sequence is that of Large ribosomal subunit protein uL16 from Acholeplasma laidlawii (strain PG-8A).